A 378-amino-acid chain; its full sequence is Cytochrome b (378 aa).

4 helical membrane-spanning segments follow: residues 34-54, 78-99, 114-134, and 179-199; these read FGSLLGLCLMLQILTGLFLAM, WFLRICHANGASFFFACLFMHV, WNTGVIILFLTMATGFLGYVL, and FFTFHFIFPFIILALMMIHLL. His84 and His98 together coordinate heme b. Heme b contacts are provided by His183 and His197. Residue His202 participates in a ubiquinone binding. A run of 4 helical transmembrane segments spans residues 227–247, 289–309, 321–341, and 348–368; these read YKDIFGFIVFYWILIRFIWKF, LGGVIALVLSIAILLILPFTH, LNQILFWNMVVVASLLTWIGA, and YVLTGQILTVLYFSYFIINPL.

This sequence belongs to the cytochrome b family. As to quaternary structure, the main subunits of complex b-c1 are: cytochrome b, cytochrome c1 and the Rieske protein. It depends on heme b as a cofactor.

The protein localises to the mitochondrion inner membrane. Its function is as follows. Component of the ubiquinol-cytochrome c reductase complex (complex III or cytochrome b-c1 complex) that is part of the mitochondrial respiratory chain. The b-c1 complex mediates electron transfer from ubiquinol to cytochrome c. Contributes to the generation of a proton gradient across the mitochondrial membrane that is then used for ATP synthesis. The chain is Cytochrome b (MT-CYB) from Anopheles quadrimaculatus (Common malaria mosquito).